The chain runs to 198 residues: Patulin synthesis protein F (198 aa).

The first 18 residues, 1-18 (MRLSTVLLGSLLGALTQA), serve as a signal peptide directing secretion. N-linked (GlcNAc...) asparagine glycans are attached at residues asparagine 128 and asparagine 184.

The protein belongs to the patF family.

It is found in the cytoplasm. The protein resides in the cytosol. It catalyses the reaction phyllostine = neopatulin. It functions in the pathway mycotoxin biosynthesis; patulin biosynthesis. Its function is as follows. Part of the gene cluster that mediates the biosynthesis of patulin, an acetate-derived tetraketide mycotoxin produced by several fungal species that shows antimicrobial properties against several bacteria. PatF catalyzes the conversion of phyllostine into neopatulin. The pathway begins with the synthesis of 6-methylsalicylic acid by the polyketide synthase (PKS) patK via condensation of acetate and malonate units. The 6-methylsalicylic acid decarboxylase patG then catalyzes the decarboxylation of 6-methylsalicylic acid to yield m-cresol (also known as 3-methylphenol). These first reactions occur in the cytosol. The intermediate m-cresol is then transported into the endoplasmic reticulum where the cytochrome P450 monooxygenase patH converts it to m-hydroxybenzyl alcohol, which is further converted to gentisyl alcohol by the cytochrome P450 monooxygenase patI. The oxidoreductases patJ and patO further convert gentisyl alcohol to isoepoxydon in the vacuole. PatN catalyzes then the transformation of isoepoxydon into phyllostine. The cluster protein patF is responsible for the conversion from phyllostine to neopatulin whereas the alcohol dehydrogenase patD converts neopatulin to E-ascladiol. The steps between isoepoxydon and E-ascladiol occur in the cytosol, and E-ascladiol is probably secreted to the extracellular space by one of the cluster-specific transporters patC or patM. Finally, the secreted patulin synthase patE catalyzes the conversion of E-ascladiol to patulin. The polypeptide is Patulin synthesis protein F (Aspergillus clavatus (strain ATCC 1007 / CBS 513.65 / DSM 816 / NCTC 3887 / NRRL 1 / QM 1276 / 107)).